The primary structure comprises 207 residues: MSDQLKIKVTRRTDFGKGAARQARRAGLIPAVVYGHGQEPVHLLLPAQETTLAVRNPNALLTVVNEAGEEHLVLPKDIQRHAIKDTVDHLDLIEVRRGEKVVVEVTVQVEGEVAPGTEYVLDYVTVPVEADATDLPEAVTISVEGREAGDHVYAPDVQVPAGATLQLEDDIVIATVNEVVEQDLGDESVQEEQAAESAEGESEGSED.

The disordered stretch occupies residues 182–207 (QDLGDESVQEEQAAESAEGESEGSED).

The protein belongs to the bacterial ribosomal protein bL25 family. CTC subfamily. Part of the 50S ribosomal subunit; part of the 5S rRNA/L5/L18/L25 subcomplex. Contacts the 5S rRNA. Binds to the 5S rRNA independently of L5 and L18.

In terms of biological role, this is one of the proteins that binds to the 5S RNA in the ribosome where it forms part of the central protuberance. This is Large ribosomal subunit protein bL25 from Micrococcus luteus (strain ATCC 4698 / DSM 20030 / JCM 1464 / CCM 169 / CCUG 5858 / IAM 1056 / NBRC 3333 / NCIMB 9278 / NCTC 2665 / VKM Ac-2230) (Micrococcus lysodeikticus).